Consider the following 352-residue polypeptide: NADP-dependent isopropanol dehydrogenase (352 aa).

C37, H59, and D150 together coordinate Zn(2+). NADP(+) contacts are provided by residues 175–178 (IGPV), 198–200 (GSR), Y218, 265–267 (VNY), and K340.

This sequence belongs to the zinc-containing alcohol dehydrogenase family. Homotetramer. Zn(2+) serves as cofactor.

It catalyses the reaction propan-2-ol + NADP(+) = acetone + NADPH + H(+). Functionally, alcohol dehydrogenase with a preference for medium chain secondary alcohols, such as 2-butanol and isopropanol. Has very low activity with primary alcohols, such as ethanol. Under physiological conditions, the enzyme reduces aldehydes and 2-ketones to produce secondary alcohols. Is also active with acetaldehyde and propionaldehyde. This Thermoanaerobacter brockii (Thermoanaerobium brockii) protein is NADP-dependent isopropanol dehydrogenase (adh).